We begin with the raw amino-acid sequence, 177 residues long: Interleukin-10 (177 aa).

An N-terminal signal peptide occupies residues 1–19 (MPSSSAVLCCLVFLAGVAA). Cystine bridges form between C31–C127 and C81–C133. N-linked (GlcNAc...) asparagine glycosylation occurs at N135.

It belongs to the IL-10 family. Homodimer. Interacts with IL10RA and IL10RB.

The protein resides in the secreted. Major immune regulatory cytokine that acts on many cells of the immune system where it has profound anti-inflammatory functions, limiting excessive tissue disruption caused by inflammation. Mechanistically, IL10 binds to its heterotetrameric receptor comprising IL10RA and IL10RB leading to JAK1 and STAT2-mediated phosphorylation of STAT3. In turn, STAT3 translocates to the nucleus where it drives expression of anti-inflammatory mediators. Targets antigen-presenting cells (APCs) such as macrophages and monocytes and inhibits their release of pro-inflammatory cytokines including granulocyte-macrophage colony-stimulating factor /GM-CSF, granulocyte colony-stimulating factor/G-CSF, IL-1 alpha, IL-1 beta, IL-6, IL-8 and TNF-alpha. Also interferes with antigen presentation by reducing the expression of MHC-class II and co-stimulatory molecules, thereby inhibiting their ability to induce T cell activation. In addition, controls the inflammatory response of macrophages by reprogramming essential metabolic pathways including mTOR signaling. The protein is Interleukin-10 (IL10) of Ovis aries (Sheep).